The primary structure comprises 739 residues: DNA ligase (739 aa).

Residue 34 to 38 (DADYD) participates in NAD(+) binding. The span at 49–59 (ARFPHLKRPDS) shows a compositional bias: basic and acidic residues. A disordered region spans residues 49–70 (ARFPHLKRPDSPSEQVGARPGE). NAD(+) is bound by residues 83–84 (SL) and E117. Catalysis depends on K119, which acts as the N6-AMP-lysine intermediate. Residues R140, E175, K291, and K315 each coordinate NAD(+). The Zn(2+) site is built by C420, C423, C438, and C444. One can recognise a BRCT domain in the interval 660 to 739 (ARDSPVAGKT…DGWLKLIEGL (80 aa)).

The protein belongs to the NAD-dependent DNA ligase family. LigA subfamily. It depends on Mg(2+) as a cofactor. Mn(2+) is required as a cofactor.

It catalyses the reaction NAD(+) + (deoxyribonucleotide)n-3'-hydroxyl + 5'-phospho-(deoxyribonucleotide)m = (deoxyribonucleotide)n+m + AMP + beta-nicotinamide D-nucleotide.. DNA ligase that catalyzes the formation of phosphodiester linkages between 5'-phosphoryl and 3'-hydroxyl groups in double-stranded DNA using NAD as a coenzyme and as the energy source for the reaction. It is essential for DNA replication and repair of damaged DNA. This Ruegeria pomeroyi (strain ATCC 700808 / DSM 15171 / DSS-3) (Silicibacter pomeroyi) protein is DNA ligase.